Consider the following 419-residue polypeptide: Probable pectate lyase C (419 aa).

An N-terminal signal peptide occupies residues 1–19; sequence MRLTPSLISCLSLLHFTSA. Asn-48, Asn-164, and Asn-201 each carry an N-linked (GlcNAc...) asparagine glycan. Arg-204 is an active-site residue. Residues 261-296 enclose the EF-hand domain; the sequence is NENFHAYVETNYYDSDKDGTLNGSELGVDSTNYGGM. The Ca(2+) site is built by Asp-274, Asp-276, Asp-278, and Thr-280. N-linked (GlcNAc...) asparagine glycosylation is present at Asn-282. Glu-285 contacts Ca(2+). Positions 350-395 are disordered; it reads ALISDEADMGGAGDLDQGTTPTDTDGDGIPDDAEAELGTDPNTADS. Low complexity predominate over residues 363–372; it reads DLDQGTTPTD. A compositionally biased stretch (acidic residues) spans 373–386; sequence TDGDGIPDDAEAEL.

It belongs to the polysaccharide lyase 1 family. The cofactor is Ca(2+).

It localises to the secreted. It carries out the reaction Eliminative cleavage of (1-&gt;4)-alpha-D-galacturonan to give oligosaccharides with 4-deoxy-alpha-D-galact-4-enuronosyl groups at their non-reducing ends.. Its function is as follows. Pectinolytic enzyme consist of four classes of enzymes: pectin lyase, polygalacturonase, pectin methylesterase and rhamnogalacturonase. Among pectinolytic enzymes, pectin lyase is the most important in depolymerization of pectin, since it cleaves internal glycosidic bonds of highly methylated pectins. Favors pectate, the anion, over pectin, the methyl ester. This is Probable pectate lyase C (plyC) from Aspergillus flavus (strain ATCC 200026 / FGSC A1120 / IAM 13836 / NRRL 3357 / JCM 12722 / SRRC 167).